A 127-amino-acid chain; its full sequence is Aspartate 1-decarboxylase (127 aa).

Serine 25 serves as the catalytic Schiff-base intermediate with substrate; via pyruvic acid. A Pyruvic acid (Ser) modification is found at serine 25. Threonine 57 lines the substrate pocket. Residue tyrosine 58 is the Proton donor of the active site. 73-75 (GAA) is a substrate binding site.

Belongs to the PanD family. Heterooctamer of four alpha and four beta subunits. Pyruvate is required as a cofactor. Is synthesized initially as an inactive proenzyme, which is activated by self-cleavage at a specific serine bond to produce a beta-subunit with a hydroxyl group at its C-terminus and an alpha-subunit with a pyruvoyl group at its N-terminus.

It localises to the cytoplasm. The catalysed reaction is L-aspartate + H(+) = beta-alanine + CO2. Its pathway is cofactor biosynthesis; (R)-pantothenate biosynthesis; beta-alanine from L-aspartate: step 1/1. Catalyzes the pyruvoyl-dependent decarboxylation of aspartate to produce beta-alanine. This chain is Aspartate 1-decarboxylase, found in Clostridium botulinum (strain ATCC 19397 / Type A).